We begin with the raw amino-acid sequence, 414 residues long: MLEEGEHVLVAVSGGIDSMTLLYVLRKFSPLLKIKITAAHLDHRIRESSRRDREFVERICRQWNIPVETSEVDVPSLWKDSGKTLEEIAREVRYDFLKRTAKKVGASKIALAHHKNDLLETVVHRLIRGTGPLGLACISPKREEFIRPFLVFKRSEIEEYAREKGVPYVVDETNYDVKYTRNFIRHRIVPLMKELNPTVEDAVYRLVSVTHLLRNFVERTVQDFVERNVYFYKDYAVFVEPEDLFLFLEVTRWVLKEMYGRVPEYEKLIGTLKSKRVEFWSGIFVERSFGYVAVGKTVFKKKYRVEVKGDMLEMEGFKIRVVNNRNDMKFWVRNRKEGDRIIVNGRERKLKDVFIEKKVPTFYRDRVPLLVDEEDRVLWVPGIARSDFLPEDVVVELLEYPVGYVKGGTYFEQV.

13–18 (SGGIDS) is an ATP binding site.

This sequence belongs to the tRNA(Ile)-lysidine synthase family.

It is found in the cytoplasm. The catalysed reaction is cytidine(34) in tRNA(Ile2) + L-lysine + ATP = lysidine(34) in tRNA(Ile2) + AMP + diphosphate + H(+). Ligates lysine onto the cytidine present at position 34 of the AUA codon-specific tRNA(Ile) that contains the anticodon CAU, in an ATP-dependent manner. Cytidine is converted to lysidine, thus changing the amino acid specificity of the tRNA from methionine to isoleucine. The protein is tRNA(Ile)-lysidine synthase of Thermotoga sp. (strain RQ2).